Reading from the N-terminus, the 140-residue chain is Large ribosomal subunit protein uL13 (140 aa).

The protein belongs to the universal ribosomal protein uL13 family. Part of the 50S ribosomal subunit.

Its function is as follows. This protein is one of the early assembly proteins of the 50S ribosomal subunit, although it is not seen to bind rRNA by itself. It is important during the early stages of 50S assembly. The chain is Large ribosomal subunit protein uL13 from Methanosarcina barkeri (strain Fusaro / DSM 804).